The primary structure comprises 165 residues: MRWKKLLFWGSALLSVGADQLTKFWVTQNFELRRPPAQPDTWPLIQNVFHFTYVTNDGAAFSLFKDSPLLPWLSFLVCLGLIGLGLFGPRFPQWEQAGYGFLLGGAAGNGIDRIFLGEVIDFLDFRLIQFPVFNIADISINVGLACLIFATWQSSRKGSRKTPTP.

Helical transmembrane passes span 68-88 (PLLPWLSFLVCLGLIGLGLFG) and 100-120 (GFLLGGAAGNGIDRIFLGEVI). Residues aspartate 121 and aspartate 137 contribute to the active site. Residues 130–150 (FPVFNIADISINVGLACLIFA) traverse the membrane as a helical segment.

Belongs to the peptidase A8 family.

It localises to the cell inner membrane. It catalyses the reaction Release of signal peptides from bacterial membrane prolipoproteins. Hydrolyzes -Xaa-Yaa-Zaa-|-(S,diacylglyceryl)Cys-, in which Xaa is hydrophobic (preferably Leu), and Yaa (Ala or Ser) and Zaa (Gly or Ala) have small, neutral side chains.. Its pathway is protein modification; lipoprotein biosynthesis (signal peptide cleavage). In terms of biological role, this protein specifically catalyzes the removal of signal peptides from prolipoproteins. The chain is Lipoprotein signal peptidase from Acaryochloris marina (strain MBIC 11017).